Reading from the N-terminus, the 243-residue chain is Adenosylcobinamide-GDP ribazoletransferase (243 aa).

A run of 5 helical transmembrane segments spans residues 31-51 (LLFY…FSAL), 57-77 (LMLH…GLHL), 109-129 (IAVV…LALI), 135-155 (IGLL…FLGT), and 188-208 (VLLA…CFFW).

It belongs to the CobS family. The cofactor is Mg(2+).

The protein localises to the cell inner membrane. It catalyses the reaction alpha-ribazole + adenosylcob(III)inamide-GDP = adenosylcob(III)alamin + GMP + H(+). The enzyme catalyses alpha-ribazole 5'-phosphate + adenosylcob(III)inamide-GDP = adenosylcob(III)alamin 5'-phosphate + GMP + H(+). It functions in the pathway cofactor biosynthesis; adenosylcobalamin biosynthesis; adenosylcobalamin from cob(II)yrinate a,c-diamide: step 7/7. Joins adenosylcobinamide-GDP and alpha-ribazole to generate adenosylcobalamin (Ado-cobalamin). Also synthesizes adenosylcobalamin 5'-phosphate from adenosylcobinamide-GDP and alpha-ribazole 5'-phosphate. The polypeptide is Adenosylcobinamide-GDP ribazoletransferase (Pseudomonas savastanoi pv. phaseolicola (strain 1448A / Race 6) (Pseudomonas syringae pv. phaseolicola (strain 1448A / Race 6))).